The primary structure comprises 208 residues: Guanylate kinase (208 aa).

A Guanylate kinase-like domain is found at 4 to 185 (GNLYIISAPS…ALVDLEHILR (182 aa)). Position 11–18 (11–18 (APSGAGKS)) interacts with ATP.

Belongs to the guanylate kinase family.

It is found in the cytoplasm. It catalyses the reaction GMP + ATP = GDP + ADP. Its function is as follows. Essential for recycling GMP and indirectly, cGMP. This chain is Guanylate kinase, found in Histophilus somni (strain 129Pt) (Haemophilus somnus).